A 57-amino-acid chain; its full sequence is uncharacterized protein (57 aa).

The span at 1-10 (MKRSRTEVGR) shows a compositional bias: basic and acidic residues. A disordered region spans residues 1-25 (MKRSRTEVGRWRMQRQASRRKSRWL).

The protein belongs to the YciY family.

This is an uncharacterized protein from Escherichia coli O1:K1 / APEC.